Here is a 695-residue protein sequence, read N- to C-terminus: Lasso peptide isopeptidase AtxE2 (695 aa).

Positions methionine 1–alanine 30 are cleaved as a signal peptide. 2 disulfides stabilise this stretch: cysteine 296–cysteine 301 and cysteine 354–cysteine 363. Serine 527 functions as the Nucleophile in the catalytic mechanism. An intrachain disulfide couples cysteine 551 to cysteine 552. Catalysis depends on charge relay system residues glutamate 610 and histidine 638.

It is found in the cytoplasm. In terms of biological role, lasso peptide isopeptidase that specifically hydrolyzes Astexin-2 and Astexin-3, converting them to linear peptides. Has only a few specific contacts with substrates, because it recognizes Astexin knotted structure (principally the loop structure). Its binding to lasso peptides opens them to expose the isopeptide bonds for hydrolysis. The chain is Lasso peptide isopeptidase AtxE2 from Asticcacaulis excentricus (strain ATCC 15261 / DSM 4724 / KCTC 12464 / NCIMB 9791 / VKM B-1370 / CB 48).